The primary structure comprises 427 residues: 5-hydroxybenzimidazole synthase BzaA (427 aa).

The protein belongs to the ThiC family. 5-hydroxybenzimidazole synthase subfamily. It depends on [4Fe-4S] cluster as a cofactor.

The catalysed reaction is 5-amino-1-(5-phospho-beta-D-ribosyl)imidazole + AH2 + S-adenosyl-L-methionine = 5-hydroxybenzimidazole + 5'-deoxyadenosine + formate + L-methionine + A + NH4(+) + phosphate + 2 H(+). It participates in cofactor biosynthesis; adenosylcobalamin biosynthesis. Its function is as follows. Together with BzaB, catalyzes the conversion of aminoimidazole ribotide (AIR) to 5-hydroxybenzimidazole (5-HBI) in a radical S-adenosyl-L-methionine (SAM)-dependent reaction. Is thus involved in the anaerobic biosynthesis of dimethylbenzimidazole (DMB), the lower axial ligand of vitamin B12 (cobalamin). Requires BzaB for catalytic activity, as BzaA alone displays no activity. The chain is 5-hydroxybenzimidazole synthase BzaA from Eubacterium limosum.